Consider the following 261-residue polypeptide: Ribosomal RNA small subunit methyltransferase J (261 aa).

Residues 111 to 112 (RD), 127 to 128 (ER), 163 to 164 (SS), and aspartate 181 each bind S-adenosyl-L-methionine.

Belongs to the methyltransferase superfamily. RsmJ family.

It is found in the cytoplasm. It catalyses the reaction guanosine(1516) in 16S rRNA + S-adenosyl-L-methionine = N(2)-methylguanosine(1516) in 16S rRNA + S-adenosyl-L-homocysteine + H(+). Specifically methylates the guanosine in position 1516 of 16S rRNA. This chain is Ribosomal RNA small subunit methyltransferase J, found in Shewanella sp. (strain ANA-3).